Here is a 192-residue protein sequence, read N- to C-terminus: Putative B3 domain-containing protein At4g03160 (192 aa).

Positions 22–44 (VFFDQEEEEEDEEEEYDEESVCE) are disordered. Positions 25–44 (DQEEEEEDEEEEYDEESVCE) are enriched in acidic residues. The segment at residues 75-173 (KDNQYRLMLG…EICFAIDSTR (99 aa)) is a DNA-binding region (TF-B3).

The protein localises to the nucleus. The polypeptide is Putative B3 domain-containing protein At4g03160 (Arabidopsis thaliana (Mouse-ear cress)).